Here is a 1168-residue protein sequence, read N- to C-terminus: DNA-directed RNA polymerase subunit beta (1168 aa).

It belongs to the RNA polymerase beta chain family. As to quaternary structure, the RNAP catalytic core consists of 2 alpha, 1 beta, 1 beta' and 1 omega subunit. When a sigma factor is associated with the core the holoenzyme is formed, which can initiate transcription.

The enzyme catalyses RNA(n) + a ribonucleoside 5'-triphosphate = RNA(n+1) + diphosphate. In terms of biological role, DNA-dependent RNA polymerase catalyzes the transcription of DNA into RNA using the four ribonucleoside triphosphates as substrates. The protein is DNA-directed RNA polymerase subunit beta of Corynebacterium kroppenstedtii (strain DSM 44385 / JCM 11950 / CIP 105744 / CCUG 35717).